The following is a 1068-amino-acid chain: Disheveled-associated activator of morphogenesis 2 (1068 aa).

Positions 40–416 (SPIPNAEELN…QIVLQDERGV (377 aa)) constitute a GBD/FH3 domain. The stretch at 434–516 (MLINENEVKQ…LVAQLSELST (83 aa)) forms a coiled coil. The tract at residues 514-586 (LSTGPVSSPP…MGLPLPQDPY (73 aa)) is disordered. The region spanning 518–594 (PVSSPPPPGG…PYPSSDVPLR (77 aa)) is the FH1 domain. Residues 540 to 572 (LPPPPPPLPFACCPPPPPPPLPPGGPPTPPGAP) show a composition bias toward pro residues. In terms of domain architecture, FH2 spans 595–994 (KKRVPQPSHP…EERRARMEAM (400 aa)). Residue Ser1015 is modified to Phosphoserine. A DAD domain is found at 1016 to 1048 (SLEEGGEFDDLVSALRSGEVFDKDLCKLKRSRK).

This sequence belongs to the formin homology family. In terms of assembly, interacts with DVL3. Interacts with INF2. As to expression, expressed in most tissues examined. Expressed in kidney glomeruli.

Its function is as follows. Key regulator of the Wnt signaling pathway, which is required for various processes during development, such as dorsal patterning, determination of left/right symmetry or myelination in the central nervous system. Acts downstream of Wnt ligands and upstream of beta-catenin (CTNNB1). Required for canonical Wnt signaling pathway during patterning in the dorsal spinal cord by promoting the aggregation of Disheveled (Dvl) complexes, thereby clustering and formation of Wnt receptor signalosomes and potentiating Wnt activity. During dorsal patterning of the spinal cord, inhibits oligodendrocytes differentiation via interaction with PIP5K1A. Also regulates non-canonical Wnt signaling pathway. Acts downstream of PITX2 in the developing gut and is required for left/right asymmetry within dorsal mesentery: affects mesenchymal condensation by lengthening cadherin-based junctions through WNT5A and non-canonical Wnt signaling, inducing polarized condensation in the left dorsal mesentery necessary to initiate gut rotation. Together with DAAM1, required for myocardial maturation and sarcomere assembly. Is a regulator of actin nucleation and elongation, filopodia formation and podocyte migration. This Homo sapiens (Human) protein is Disheveled-associated activator of morphogenesis 2.